The following is a 91-amino-acid chain: Acylphosphatase (91 aa).

One can recognise an Acylphosphatase-like domain in the interval 3–89 (AKHLILSGRV…PAEPGFVKRA (87 aa)). Catalysis depends on residues arginine 18 and asparagine 36.

It belongs to the acylphosphatase family.

It catalyses the reaction an acyl phosphate + H2O = a carboxylate + phosphate + H(+). The chain is Acylphosphatase (acyP) from Acidiphilium cryptum (strain JF-5).